The sequence spans 228 residues: UPF0173 metal-dependent hydrolase Smar_0891 (228 aa).

Belongs to the UPF0173 family.

This Staphylothermus marinus (strain ATCC 43588 / DSM 3639 / JCM 9404 / F1) protein is UPF0173 metal-dependent hydrolase Smar_0891.